The following is a 347-amino-acid chain: GMP reductase (347 aa).

108–131 (ADFEKTKQILDLNPALNFVCIDVA) is a binding site for NADP(+). K(+)-binding residues include Gly-181 and Gly-183. Cys-186 functions as the Thioimidate intermediate in the catalytic mechanism. NADP(+) is bound at residue 216–239 (IVSDGGCTTPGDVAKAFGGGADFV).

This sequence belongs to the IMPDH/GMPR family. GuaC type 1 subfamily. As to quaternary structure, homotetramer.

It catalyses the reaction IMP + NH4(+) + NADP(+) = GMP + NADPH + 2 H(+). Catalyzes the irreversible NADPH-dependent deamination of GMP to IMP. It functions in the conversion of nucleobase, nucleoside and nucleotide derivatives of G to A nucleotides, and in maintaining the intracellular balance of A and G nucleotides. This chain is GMP reductase, found in Shigella flexneri.